Here is a 325-residue protein sequence, read N- to C-terminus: Nod factor export ATP-binding protein I (325 aa).

The region spanning 27–257 (LELRKVRKQY…QIGCDVVEVY (231 aa)) is the ABC transporter domain. 59 to 66 (GPNGAGKT) serves as a coordination point for ATP.

Belongs to the ABC transporter superfamily. Lipooligosaccharide exporter (TC 3.A.1.102) family. The complex is composed of two ATP-binding proteins (NodI) and two transmembrane proteins (NodJ).

It localises to the cell inner membrane. In terms of biological role, part of the ABC transporter complex NodIJ involved in the export of the nodulation factors (Nod factors), the bacterial signal molecules that induce symbiosis and subsequent nodulation induction. Nod factors are LCO (lipo-chitin oligosaccharide), a modified beta-1,4-linked N-acetylglucosamine oligosaccharide. This subunit is responsible for energy coupling to the transport system. The chain is Nod factor export ATP-binding protein I from Cupriavidus pinatubonensis (strain JMP 134 / LMG 1197) (Cupriavidus necator (strain JMP 134)).